The following is an 86-amino-acid chain: Small ribosomal subunit protein uS15 (86 aa).

A compositionally biased stretch (polar residues) spans 1–10; it reads MSIDTQSIIE. A disordered region spans residues 1 to 21; that stretch reads MSIDTQSIIENNKRSAHDTGS.

Belongs to the universal ribosomal protein uS15 family. Part of the 30S ribosomal subunit. Forms a bridge to the 50S subunit in the 70S ribosome, contacting the 23S rRNA.

One of the primary rRNA binding proteins, it binds directly to 16S rRNA where it helps nucleate assembly of the platform of the 30S subunit by binding and bridging several RNA helices of the 16S rRNA. Its function is as follows. Forms an intersubunit bridge (bridge B4) with the 23S rRNA of the 50S subunit in the ribosome. This chain is Small ribosomal subunit protein uS15, found in Xylella fastidiosa (strain M23).